Here is an 842-residue protein sequence, read N- to C-terminus: Elongation factor 2 (842 aa).

The 330-residue stretch at 17-346 (TNVRNMSVIA…MIVMHLPSPV (330 aa)) folds into the tr-type G domain. GTP is bound by residues 26–33 (AHVDHGKS), 158–161 (NKVD), and 213–215 (SGL). H699 bears the Diphthamide mark.

The protein belongs to the TRAFAC class translation factor GTPase superfamily. Classic translation factor GTPase family. EF-G/EF-2 subfamily.

The protein resides in the cytoplasm. The catalysed reaction is GTP + H2O = GDP + phosphate + H(+). Functionally, catalyzes the GTP-dependent ribosomal translocation step during translation elongation. During this step, the ribosome changes from the pre-translocational (PRE) to the post-translocational (POST) state as the newly formed A-site-bound peptidyl-tRNA and P-site-bound deacylated tRNA move to the P and E sites, respectively. Catalyzes the coordinated movement of the two tRNA molecules, the mRNA and conformational changes in the ribosome. The sequence is that of Elongation factor 2 (EFT1) from Candida glabrata (strain ATCC 2001 / BCRC 20586 / JCM 3761 / NBRC 0622 / NRRL Y-65 / CBS 138) (Yeast).